Here is a 96-residue protein sequence, read N- to C-terminus: Putative defensin-like protein 263 (96 aa).

Residues 1–26 (MEKTSLKLVFLFSLTVIALCLSLSAA) form the signal peptide. 4 cysteine pairs are disulfide-bonded: Cys-48–Cys-96, Cys-67–Cys-86, Cys-73–Cys-91, and Cys-77–Cys-93.

Belongs to the DEFL family.

The protein localises to the secreted. This Arabidopsis thaliana (Mouse-ear cress) protein is Putative defensin-like protein 263.